The primary structure comprises 178 residues: DELTA-miturgitoxin-Cp3a (178 aa).

The first 18 residues, 1 to 18 (MKALYLLGLLAFLYSCSS), serve as a signal peptide directing secretion. A propeptide spanning residues 19-46 (ENVYDLQPESSEEENPGTFLEAIQEQSR) is cleaved from the precursor. The Processing quadruplet motif signature appears at 43 to 46 (EQSR). Intrachain disulfides connect Cys-48–Cys-63, Cys-55–Cys-72, Cys-62–Cys-86, Cys-74–Cys-84, Cys-113–Cys-128, Cys-120–Cys-137, Cys-127–Cys-155, and Cys-139–Cys-153.

Belongs to the spider toxin CSTX family. Double-CSTX subfamily. Post-translationally, cleavage of the propeptide depends on the processing quadruplet motif (XXXR, with at least one of X being E). In terms of tissue distribution, expressed by the venom gland.

It is found in the secreted. Its function is as follows. Spider venom toxin that exhibits cytolytic activity by forming an alpha-helix across the membrane. Lethal to insect larvae. The chain is DELTA-miturgitoxin-Cp3a from Cheiracanthium punctorium (Yellow sac spider).